Consider the following 147-residue polypeptide: Hemoglobin subunit beta-2 (147 aa).

One can recognise a Globin domain in the interval 3–147; the sequence is HWTAEEKATI…LVAALSHGYF (145 aa). 2 residues coordinate heme b: histidine 64 and histidine 93.

The protein belongs to the globin family. In terms of assembly, heterotetramer of two alpha chains and two beta chains. Red blood cells.

In terms of biological role, this is a larval (tadpole) beta-globin. The protein is Hemoglobin subunit beta-2 (hbb2) of Xenopus tropicalis (Western clawed frog).